A 518-amino-acid polypeptide reads, in one-letter code: Arrestin-related trafficking adapter 10 (518 aa).

K118 is covalently cross-linked (Glycyl lysine isopeptide (Lys-Gly) (interchain with G-Cter in ubiquitin)).

The protein belongs to the ART10 family. As to quaternary structure, interacts with RSP5. Ubiquitinated by RSP5.

It is found in the cytoplasm. May regulate endocytosis by recruiting RSP5 ubiquitin ligase activity to specific plasma membrane proteins in response to extracellular stimuli. This chain is Arrestin-related trafficking adapter 10 (ART10), found in Saccharomyces cerevisiae (strain Lalvin EC1118 / Prise de mousse) (Baker's yeast).